The primary structure comprises 277 residues: Diaminopimelate epimerase (277 aa).

The substrate site is built by Asn-13, Gln-46, and Asn-66. Cys-75 serves as the catalytic Proton donor. Substrate contacts are provided by residues 76-77 (GN), Asn-160, Asn-193, and 211-212 (ER). Catalysis depends on Cys-220, which acts as the Proton acceptor. Residue 221–222 (GS) participates in substrate binding.

Belongs to the diaminopimelate epimerase family. As to quaternary structure, homodimer.

The protein localises to the cytoplasm. The enzyme catalyses (2S,6S)-2,6-diaminopimelate = meso-2,6-diaminopimelate. It functions in the pathway amino-acid biosynthesis; L-lysine biosynthesis via DAP pathway; DL-2,6-diaminopimelate from LL-2,6-diaminopimelate: step 1/1. Its function is as follows. Catalyzes the stereoinversion of LL-2,6-diaminopimelate (L,L-DAP) to meso-diaminopimelate (meso-DAP), a precursor of L-lysine and an essential component of the bacterial peptidoglycan. The chain is Diaminopimelate epimerase from Legionella pneumophila (strain Paris).